The primary structure comprises 240 residues: UDP-2,3-diacylglucosamine hydrolase (240 aa).

Residues Asp-8, His-10, Asp-41, Asn-79, and His-114 each contribute to the Mn(2+) site. 79–80 (NR) lines the substrate pocket. Residues Asp-122, Ser-160, Asn-164, Lys-167, and His-195 each coordinate substrate. His-195 and His-197 together coordinate Mn(2+).

It belongs to the LpxH family. It depends on Mn(2+) as a cofactor.

The protein resides in the cell inner membrane. The catalysed reaction is UDP-2-N,3-O-bis[(3R)-3-hydroxytetradecanoyl]-alpha-D-glucosamine + H2O = 2-N,3-O-bis[(3R)-3-hydroxytetradecanoyl]-alpha-D-glucosaminyl 1-phosphate + UMP + 2 H(+). Its pathway is glycolipid biosynthesis; lipid IV(A) biosynthesis; lipid IV(A) from (3R)-3-hydroxytetradecanoyl-[acyl-carrier-protein] and UDP-N-acetyl-alpha-D-glucosamine: step 4/6. Functionally, hydrolyzes the pyrophosphate bond of UDP-2,3-diacylglucosamine to yield 2,3-diacylglucosamine 1-phosphate (lipid X) and UMP by catalyzing the attack of water at the alpha-P atom. Involved in the biosynthesis of lipid A, a phosphorylated glycolipid that anchors the lipopolysaccharide to the outer membrane of the cell. This chain is UDP-2,3-diacylglucosamine hydrolase, found in Yersinia enterocolitica serotype O:8 / biotype 1B (strain NCTC 13174 / 8081).